The primary structure comprises 327 residues: Tryptophan--tRNA ligase (327 aa).

Residues 9–11 and 17–18 contribute to the ATP site; these read QPS and GN. The 'HIGH' region signature appears at 10 to 18; sequence PSGTLTLGN. Aspartate 132 contributes to the L-tryptophan binding site. ATP-binding positions include 144–146, isoleucine 183, and 192–196; these read GDD and KMSKS. A 'KMSKS' region motif is present at residues 192–196; sequence KMSKS.

This sequence belongs to the class-I aminoacyl-tRNA synthetase family. In terms of assembly, homodimer.

It localises to the cytoplasm. The enzyme catalyses tRNA(Trp) + L-tryptophan + ATP = L-tryptophyl-tRNA(Trp) + AMP + diphosphate + H(+). Its function is as follows. Catalyzes the attachment of tryptophan to tRNA(Trp). This Oceanobacillus iheyensis (strain DSM 14371 / CIP 107618 / JCM 11309 / KCTC 3954 / HTE831) protein is Tryptophan--tRNA ligase.